Reading from the N-terminus, the 248-residue chain is 2,3-bisphosphoglycerate-dependent phosphoglycerate mutase (248 aa).

Residues 8 to 15, 21 to 22, arginine 60, 87 to 90, lysine 98, 114 to 115, and 183 to 184 each bind substrate; these read RHGESVWN, TG, ERHY, RR, and GN. Histidine 9 (tele-phosphohistidine intermediate) is an active-site residue. Glutamate 87 acts as the Proton donor/acceptor in catalysis.

Belongs to the phosphoglycerate mutase family. BPG-dependent PGAM subfamily.

It catalyses the reaction (2R)-2-phosphoglycerate = (2R)-3-phosphoglycerate. Its pathway is carbohydrate degradation; glycolysis; pyruvate from D-glyceraldehyde 3-phosphate: step 3/5. In terms of biological role, catalyzes the interconversion of 2-phosphoglycerate and 3-phosphoglycerate. The protein is 2,3-bisphosphoglycerate-dependent phosphoglycerate mutase of Brachyspira hyodysenteriae (strain ATCC 49526 / WA1).